A 1460-amino-acid chain; its full sequence is Centrosomal protein of 164 kDa (1460 aa).

Positions 1–194 (MAGRPLRIGD…PSQGLKTSAY (194 aa)) are interaction with ATRIP. One can recognise a WW domain in the interval 56-89 (APLPGEWKPCQDITGDIYYFNFANGQSMWDHPCD). The disordered stretch occupies residues 107–135 (GAIKKKKKKKEKKDKKDRDPPKSSLALGS). The span at 109–119 (IKKKKKKKEKK) shows a compositional bias: basic residues. Residue Ser-186 is modified to Phosphoserine; by ATR and ATM. At Ser-201 the chain carries Phosphoserine. Disordered stretches follow at residues 213–412 (GLGE…HGLD), 440–593 (AQQP…AALK), and 658–719 (EEAR…QKNR). Over residues 217–227 (ETNEEDEEESD) the composition is skewed to acidic residues. Over residues 256–270 (ESLRTSQPEEKKDVS) the composition is skewed to basic and acidic residues. Over residues 285–296 (SSPGADSSLSSA) the composition is skewed to low complexity. Composition is skewed to basic and acidic residues over residues 310 to 323 (LPEKEENEKSEPKI) and 357 to 367 (EGSRREEAAKE). Over residues 453 to 464 (QSSQDELQSKQS) the composition is skewed to low complexity. Over residues 465–481 (KGLEERLSPPLPHEERA) the composition is skewed to basic and acidic residues. A compositionally biased stretch (low complexity) spans 514–525 (SAASLSLQLSLQ). A compositionally biased stretch (basic and acidic residues) spans 537–546 (EKGKEQHSQA). Ser-566 bears the Phosphoserine mark. 2 stretches are compositionally biased toward basic and acidic residues: residues 658–668 (EEARMREEESQ) and 686–719 (DQIRAEQEASLQKLREELESQQKAERASLEQKNR). Residues 1154–1206 (GIKALEDMRKNLEKETRHLDEMKSAMRKGHNLLKKKEEKLNQLESSLWEEASD) are a coiled coil. Residues 1290–1310 (PPPLLASMPAQLPPRDPKSTP) form a disordered region. 3 positions are modified to phosphoserine: Ser-1386, Ser-1388, and Ser-1443.

As to quaternary structure, interacts (via N-terminus) with ATRIP. Interacts with ATM, ATR and MDC1. Interacts with XPA (via N-terminus) upon UV irradiation. Interacts with CEP83, CCDC92, TTBK2, DVL3, NPHP3 and weakly with NPHP4. Interacts with DZIP1. Phosphorylation at Ser-186 is induced upon DNA-damage caused by treatment with IR irradiation, UV irradiation, hydroxyurea or amphidicolin. Also MDC1-mediated chromatin remodeling is critical for DNA damage-induced phosphorylation. In terms of tissue distribution, expressed in several cell lines.

The protein localises to the cytoplasm. It localises to the cytoskeleton. It is found in the microtubule organizing center. Its subcellular location is the centrosome. The protein resides in the centriole. The protein localises to the nucleus. In terms of biological role, plays a role in microtubule organization and/or maintenance for the formation of primary cilia (PC), a microtubule-based structure that protrudes from the surface of epithelial cells. Plays a critical role in G2/M checkpoint and nuclear divisions. A key player in the DNA damage-activated ATR/ATM signaling cascade since it is required for the proper phosphorylation of H2AX, RPA, CHEK2 and CHEK1. Plays a critical role in chromosome segregation, acting as a mediator required for the maintenance of genomic stability through modulation of MDC1, RPA and CHEK1. The polypeptide is Centrosomal protein of 164 kDa (CEP164) (Homo sapiens (Human)).